Here is a 196-residue protein sequence, read N- to C-terminus: Putative NADH dehydrogenase/NAD(P)H nitroreductase SCO5049 (196 aa).

Belongs to the nitroreductase family. HadB/RutE subfamily. FMN is required as a cofactor.

In Streptomyces coelicolor (strain ATCC BAA-471 / A3(2) / M145), this protein is Putative NADH dehydrogenase/NAD(P)H nitroreductase SCO5049.